Here is a 145-residue protein sequence, read N- to C-terminus: UPF0179 protein TV1250 (145 aa).

The protein belongs to the UPF0179 family.

This chain is UPF0179 protein TV1250, found in Thermoplasma volcanium (strain ATCC 51530 / DSM 4299 / JCM 9571 / NBRC 15438 / GSS1).